The chain runs to 176 residues: Negative modulator of initiation of replication (176 aa).

It belongs to the SeqA family. In terms of assembly, homodimer. Polymerizes to form helical filaments.

The protein localises to the cytoplasm. Functionally, negative regulator of replication initiation, which contributes to regulation of DNA replication and ensures that replication initiation occurs exactly once per chromosome per cell cycle. Binds to pairs of hemimethylated GATC sequences in the oriC region, thus preventing assembly of replication proteins and re-initiation at newly replicated origins. Repression is relieved when the region becomes fully methylated. In Hamiltonella defensa subsp. Acyrthosiphon pisum (strain 5AT), this protein is Negative modulator of initiation of replication.